We begin with the raw amino-acid sequence, 175 residues long: Large ribosomal subunit protein uL10 (175 aa).

It belongs to the universal ribosomal protein uL10 family. Part of the ribosomal stalk of the 50S ribosomal subunit. The N-terminus interacts with L11 and the large rRNA to form the base of the stalk. The C-terminus forms an elongated spine to which L12 dimers bind in a sequential fashion forming a multimeric L10(L12)X complex.

Its function is as follows. Forms part of the ribosomal stalk, playing a central role in the interaction of the ribosome with GTP-bound translation factors. This is Large ribosomal subunit protein uL10 from Prochlorococcus marinus (strain MIT 9313).